A 235-amino-acid chain; its full sequence is Phosphoribosylaminoimidazole-succinocarboxamide synthase (235 aa).

This sequence belongs to the SAICAR synthetase family.

The catalysed reaction is 5-amino-1-(5-phospho-D-ribosyl)imidazole-4-carboxylate + L-aspartate + ATP = (2S)-2-[5-amino-1-(5-phospho-beta-D-ribosyl)imidazole-4-carboxamido]succinate + ADP + phosphate + 2 H(+). It participates in purine metabolism; IMP biosynthesis via de novo pathway; 5-amino-1-(5-phospho-D-ribosyl)imidazole-4-carboxamide from 5-amino-1-(5-phospho-D-ribosyl)imidazole-4-carboxylate: step 1/2. This Streptococcus pneumoniae serotype 19F (strain G54) protein is Phosphoribosylaminoimidazole-succinocarboxamide synthase.